A 215-amino-acid chain; its full sequence is 3-demethoxyubiquinol 3-hydroxylase (215 aa).

Positions 26-47 (PSSAHSQRPSPAVVQPEHKMSE) are disordered. Residues Glu-64, Glu-94, His-97, Glu-146, Glu-178, and His-181 each coordinate Fe cation.

The protein belongs to the COQ7 family. It depends on Fe cation as a cofactor.

It is found in the cell membrane. The enzyme catalyses a 5-methoxy-2-methyl-3-(all-trans-polyprenyl)benzene-1,4-diol + AH2 + O2 = a 3-demethylubiquinol + A + H2O. The protein operates within cofactor biosynthesis; ubiquinone biosynthesis. Functionally, catalyzes the hydroxylation of 2-nonaprenyl-3-methyl-6-methoxy-1,4-benzoquinol during ubiquinone biosynthesis. This Pseudomonas syringae pv. syringae (strain B728a) protein is 3-demethoxyubiquinol 3-hydroxylase.